Consider the following 515-residue polypeptide: Integrator complex subunit 14 (515 aa).

One can recognise a VWFA domain in the interval 2–204 (PTVVVMDVSL…KNVQSMFGKL (203 aa)). Residues S10, S12, and T86 each contribute to the Mg(2+) site. The residue at position 418 (K418) is an N6-acetyllysine.

This sequence belongs to the Integrator subunit 14 family. In terms of assembly, component of the Integrator complex, composed of core subunits INTS1, INTS2, INTS3, INTS4, INTS5, INTS6, INTS7, INTS8, INTS9/RC74, INTS10, INTS11/CPSF3L, INTS12, INTS13, INTS14 and INTS15. The core complex associates with protein phosphatase 2A subunits PPP2CA and PPP2R1A, to form the Integrator-PP2A (INTAC) complex. INTS14 is part of the tail subcomplex, composed of INTS10, INTS13, INTS14 and INTS15.

The protein localises to the nucleus. Its function is as follows. Component of the integrator complex, a multiprotein complex that terminates RNA polymerase II (Pol II) transcription in the promoter-proximal region of genes. The integrator complex provides a quality checkpoint during transcription elongation by driving premature transcription termination of transcripts that are unfavorably configured for transcriptional elongation: the complex terminates transcription by (1) catalyzing dephosphorylation of the C-terminal domain (CTD) of Pol II subunit POLR2A/RPB1 and SUPT5H/SPT5, (2) degrading the exiting nascent RNA transcript via endonuclease activity and (3) promoting the release of Pol II from bound DNA. The integrator complex is also involved in terminating the synthesis of non-coding Pol II transcripts, such as enhancer RNAs (eRNAs), small nuclear RNAs (snRNAs), telomerase RNAs and long non-coding RNAs (lncRNAs). Within the integrator complex, INTS14 is part of the integrator tail module that acts as a platform for the recruitment of transcription factors at promoters. The chain is Integrator complex subunit 14 from Mus musculus (Mouse).